We begin with the raw amino-acid sequence, 581 residues long: MDSSTTIPITPTRTPCFFNISSSFNEHSPLNFYDEPIYNFSSGHEENQSHKSSKLTFFKPSNTKRSPHTPMQNNAKAIRLSTTVRHGIFKNSDLDGCSKPFAFSSGLKLSKKIVDASTPIDLKRKRAVTSLSTGLLSKREKWSLWEGNLTNPRSEQPHTPCKKGTKIKLKPPQSPLSPTTSLLARKCKHIDLDTFSRLDHPNSDSSDETFEMEELPSLSYGSEDLLEFCETPCKSQPIFLSSSHVNNWDEKDVPSSLSWTPTSPIFLNINSADDYEEEEDWTSDLRIRFQQVKPIHESDFSFVYHVSSINPPTETVYVVKMLKKNAAKFTGKERHLQEVSILQRLQACPFVVNLVNVWSYNDNIFLQLDYCENGDLSLFLSELGLLQVMDPFRVWKMLFQLTQALNFIHLLEFVHLDVKPSNVLITRDGNLKLGDFGLATSLPVSSMVDLEGDRVYIAPEILASHNYGKPADVYSLGLSMIEAATNVVLPENGVEWQRLRSGDYSNLPNLKDLLLSKEKVQINKVRCAESLQCLLQRMTHPYVDCRPTTQDLLAMPEMIFISEHSQKAAIIYEDHNSWLET.

Disordered regions lie at residues 43–71 (GHEENQSHKSSKLTFFKPSNTKRSPHTPM) and 148–178 (NLTNPRSEQPHTPCKKGTKIKLKPPQSPLSP). A compositionally biased stretch (polar residues) spans 59–71 (KPSNTKRSPHTPM). Residues 160 to 169 (PCKKGTKIKL) are compositionally biased toward basic residues. The region spanning 289–561 (FQQVKPIHES…LLAMPEMIFI (273 aa)) is the Protein kinase domain. ATP-binding positions include 295–303 (IHESDFSFV) and lysine 320. Residue aspartate 417 is the Proton acceptor of the active site. Positions 422 and 435 each coordinate Mg(2+).

It belongs to the protein kinase superfamily. Ser/Thr protein kinase family. WEE1 subfamily.

The catalysed reaction is L-seryl-[protein] + ATP = O-phospho-L-seryl-[protein] + ADP + H(+). It carries out the reaction L-threonyl-[protein] + ATP = O-phospho-L-threonyl-[protein] + ADP + H(+). Protein kinase that acts both on serines and on tyrosines. It acts as a negative regulator of entry into mitosis (G2 to M transition). Phosphorylates and inhibits cdc2. This Schizosaccharomyces pombe (strain 972 / ATCC 24843) (Fission yeast) protein is Mitosis inhibitor protein kinase mik1 (mik1).